The chain runs to 1054 residues: Disks large-associated protein 2 (1054 aa).

Disordered stretches follow at residues E32–R87 and S242–N301. A compositionally biased stretch (polar residues) spans S242–G255. The segment covering H267–E281 has biased composition (basic residues). Residues R289–D299 are compositionally biased toward low complexity. S298, S304, S386, and S452 each carry phosphoserine. Disordered stretches follow at residues G442–E464 and Y609–L666. Residues V628 to Y641 show a composition bias toward polar residues. A phosphoserine mark is found at S662, S665, S668, and S715. The disordered stretch occupies residues Q719–G746. T738 carries the phosphothreonine modification. A phosphoserine mark is found at S740, S771, S806, S978, and S1007. Composition is skewed to basic and acidic residues over residues E977 to V987 and I1002 to R1020. Positions E977 to R1021 are disordered.

Belongs to the SAPAP family. In terms of assembly, interacts with DLG1 and DLG4/PSD-95. Expressed in brain and kidney.

The protein localises to the cell membrane. It localises to the postsynaptic density. Its subcellular location is the synapse. May play a role in the molecular organization of synapses and neuronal cell signaling. Could be an adapter protein linking ion channel to the subsynaptic cytoskeleton. May induce enrichment of PSD-95/SAP90 at the plasma membrane. This Homo sapiens (Human) protein is Disks large-associated protein 2.